Here is a 364-residue protein sequence, read N- to C-terminus: Methylthioribose-1-phosphate isomerase (364 aa).

Substrate contacts are provided by residues 53–55, arginine 90, and glutamine 203; that span reads RGA. Aspartate 244 acts as the Proton donor in catalysis. 254–255 is a binding site for substrate; sequence NK.

This sequence belongs to the eIF-2B alpha/beta/delta subunits family. MtnA subfamily.

The enzyme catalyses 5-(methylsulfanyl)-alpha-D-ribose 1-phosphate = 5-(methylsulfanyl)-D-ribulose 1-phosphate. The protein operates within amino-acid biosynthesis; L-methionine biosynthesis via salvage pathway; L-methionine from S-methyl-5-thio-alpha-D-ribose 1-phosphate: step 1/6. Its function is as follows. Catalyzes the interconversion of methylthioribose-1-phosphate (MTR-1-P) into methylthioribulose-1-phosphate (MTRu-1-P). The protein is Methylthioribose-1-phosphate isomerase of Brucella anthropi (strain ATCC 49188 / DSM 6882 / CCUG 24695 / JCM 21032 / LMG 3331 / NBRC 15819 / NCTC 12168 / Alc 37) (Ochrobactrum anthropi).